Consider the following 454-residue polypeptide: MNTGVICGVRVSHNRASVEEIELAGERDSRTIMETLLTRDGITESFAIQTCNRSEAYVVADGAVAGRRALASFAPDVRDGAVVDMSHEESLRHLLRVATGLESLVLGEDQILGQFKRAIEVARGIGALGPMLEAGVTKAIHVGERARSETSINEGAVSIGSAAVRLAGQSVGLNGRKALVIGAGEMGSLVAESLASTNISEVVIANRTIENAESIAETINSPAYAVSLDSLTEVITEASIIMTATGYGKYLIEPTDIDGAGETFIIDLAQPRNVHPATADIENAIVQDIDALESITKETEASRQAAAREVDAMIDEEFDRLLESYKRQRADEAISEMYEAAEHVKRREVETALEKLEKQGTLTDNQRETISSMADTLINQLLAAPTKSLRDAAAEDDWTTIQTAMTLFDPNFGGDTPQPDRPDDIPRAAERGDISGDDLPDDVPNHIAEKVSDG.

Substrate contacts are provided by residues 50–53 (TCNR), Ser103, 108–110 (EDQ), and Gln114. Cys51 serves as the catalytic Nucleophile. NADP(+) is bound at residue 182–187 (GAGEMG). The tract at residues 407–454 (LFDPNFGGDTPQPDRPDDIPRAAERGDISGDDLPDDVPNHIAEKVSDG) is disordered. Basic and acidic residues-rich tracts occupy residues 418–434 (QPDR…RGDI) and 443–454 (VPNHIAEKVSDG).

This sequence belongs to the glutamyl-tRNA reductase family. Homodimer.

The catalysed reaction is (S)-4-amino-5-oxopentanoate + tRNA(Glu) + NADP(+) = L-glutamyl-tRNA(Glu) + NADPH + H(+). It functions in the pathway porphyrin-containing compound metabolism; protoporphyrin-IX biosynthesis; 5-aminolevulinate from L-glutamyl-tRNA(Glu): step 1/2. Its function is as follows. Catalyzes the NADPH-dependent reduction of glutamyl-tRNA(Glu) to glutamate 1-semialdehyde (GSA). In Haloquadratum walsbyi (strain DSM 16790 / HBSQ001), this protein is Glutamyl-tRNA reductase.